Here is a 211-residue protein sequence, read N- to C-terminus: Large ribosomal subunit protein bL25 (211 aa).

The protein belongs to the bacterial ribosomal protein bL25 family. CTC subfamily. In terms of assembly, part of the 50S ribosomal subunit; part of the 5S rRNA/L5/L18/L25 subcomplex. Contacts the 5S rRNA. Binds to the 5S rRNA independently of L5 and L18.

Its function is as follows. This is one of the proteins that binds to the 5S RNA in the ribosome where it forms part of the central protuberance. This chain is Large ribosomal subunit protein bL25, found in Anaplasma phagocytophilum (strain HZ).